The following is a 105-amino-acid chain: Protein SMALL AUXIN UP-REGULATED RNA 16 (105 aa).

This sequence belongs to the ARG7 family. As to expression, expressed in etiolated hypocotyls, cotyledons, leaves, flowers and siliques.

Its subcellular location is the cell membrane. Functionally, provide a mechanistic link between auxin and plasma membrane H(+)-ATPases (PM H(+)-ATPases, e.g. AHA1 and AHA2), and triggers PM H(+)-ATPases activity by promoting phosphorylation of their C-terminal autoinhibitory domain as a result of PP2C-D subfamily of type 2C phosphatases inhibition, thus leading to the acidification of the apoplast and the facilitation of solutes and water uptake to drive cell expansion. Triggers plant growth probably by promoting cell elongation. Regulates branch angles and bending. This chain is Protein SMALL AUXIN UP-REGULATED RNA 16, found in Arabidopsis thaliana (Mouse-ear cress).